A 210-amino-acid chain; its full sequence is Flagellar transcriptional regulator FlhC (210 aa).

Zn(2+) is bound by residues Cys144, Cys147, Cys164, and Cys167.

The protein belongs to the FlhC family. Heterohexamer composed of two FlhC and four FlhD subunits. Each FlhC binds a FlhD dimer, forming a heterotrimer, and a hexamer assembles by dimerization of two heterotrimers. It depends on Zn(2+) as a cofactor.

The protein localises to the cytoplasm. Functionally, functions in complex with FlhD as a master transcriptional regulator that regulates transcription of several flagellar and non-flagellar operons by binding to their promoter region. Activates expression of class 2 flagellar genes, including fliA, which is a flagellum-specific sigma factor that turns on the class 3 genes. Also regulates genes whose products function in a variety of physiological pathways. This Cupriavidus pinatubonensis (strain JMP 134 / LMG 1197) (Cupriavidus necator (strain JMP 134)) protein is Flagellar transcriptional regulator FlhC.